A 133-amino-acid chain; its full sequence is Homeobox protein HD-5 (133 aa).

Positions 34 to 93 form a DNA-binding region, homeobox; sequence SKRSRLKLSGQQIDVLESNFKIDSHPNSATKSLLSNALSIPLKNIQIWFQNRRAKEKTAR. The tract at residues 86-109 is disordered; the sequence is RAKEKTARDGGRRRSGNAEIEDGE.

It is found in the nucleus. The polypeptide is Homeobox protein HD-5 (HD-5) (Encephalitozoon cuniculi (strain GB-M1) (Microsporidian parasite)).